A 198-amino-acid chain; its full sequence is Cyclotides mra4/mra5 (198 aa).

The signal sequence occupies residues 1-22; it reads MESNKMVVGVLLIAAFALPALA. Residues 23–79 constitute a propeptide that is removed on maturation; it reads LFERDVITHETIEAVLKKSTPNSNTMLQEDAINALTGKTLISQTILEETLLKNGVVG. 3 disulfides stabilise this stretch: C84–C100, C88–C102, and C93–C107. Residues 111 to 163 constitute a propeptide that is removed on maturation; the sequence is SLALPTLEKDVITPEALEAVLKSNGGAIVNTKTIISNAIFEETLLNNANHVLG. 3 disulfide bridges follow: C167–C183, C171–C185, and C176–C190. Residues 194–198 constitute a propeptide that is removed on maturation; sequence SLALN.

It belongs to the cyclotide family. Bracelet subfamily. In terms of processing, these are cyclic peptides. Post-translationally, the mature peptides contain 3 disulfide bonds each.

Functionally, probably participates in a plant defense mechanism. The chain is Cyclotides mra4/mra5 from Melicytus ramiflorus (Whitey wood).